We begin with the raw amino-acid sequence, 394 residues long: MGIKQLFSIIKDEAPAAIKEGDIKNQFGRKVAIDASMSIYSFLIAVRSDGQQLMNEAGETTSHLMGMFYRTLRMVDNGIKPLYVFDGAPPKLKSGELAKRFQRKQEATEGLEEAKETGTAEDVEKFSRRTVRVTREHNAECQKLLKLMGIPYIVAPTEAEAQCAVLARAGKVYAAASEDMDTLCFHTPILLRHLTFSEQRKEPIQEIHTDKVLEGLGMDRKQFVDLCILLGCDYLDPIPKVGPSTALKLIREHGTLEEVVEWMKADPKGRYQIPEDWPFEDARALFFEPDVRPADDPLCDFKWEKPDIEGLVQFLAHEKGFSEDRVRSASIKLQKNMQTSQQARIEGFFKVLPKTEEEKKAHKRKLEEQAEQKRKKVKEEKKEKAKLKAKPRGA.

Residues M1–K104 are N-domain. D34 contributes to the Mg(2+) binding site. DNA is bound by residues R47 and R70. Mg(2+)-binding residues include D86, E158, E160, D179, and D181. The tract at residues D122–H253 is I-domain. E158 is a DNA binding site. DNA is bound by residues G231 and D233. D233 is a Mg(2+) binding site. Residues Q341–F349 form an interaction with PCNA region. The span at E356–E383 shows a compositional bias: basic and acidic residues. The segment at E356–A394 is disordered. Positions K384–A394 are enriched in basic residues.

Belongs to the XPG/RAD2 endonuclease family. FEN1 subfamily. As to quaternary structure, interacts with PCNA. Three molecules of FEN1 bind to one PCNA trimer with each molecule binding to one PCNA monomer. PCNA stimulates the nuclease activity without altering cleavage specificity. The cofactor is Mg(2+). In terms of processing, phosphorylated. Phosphorylation upon DNA damage induces relocalization to the nuclear plasma.

It localises to the nucleus. It is found in the nucleolus. The protein resides in the nucleoplasm. The protein localises to the mitochondrion. In terms of biological role, structure-specific nuclease with 5'-flap endonuclease and 5'-3' exonuclease activities involved in DNA replication and repair. During DNA replication, cleaves the 5'-overhanging flap structure that is generated by displacement synthesis when DNA polymerase encounters the 5'-end of a downstream Okazaki fragment. It enters the flap from the 5'-end and then tracks to cleave the flap base, leaving a nick for ligation. Also involved in the long patch base excision repair (LP-BER) pathway, by cleaving within the apurinic/apyrimidinic (AP) site-terminated flap. Acts as a genome stabilization factor that prevents flaps from equilibrating into structures that lead to duplications and deletions. Also possesses 5'-3' exonuclease activity on nicked or gapped double-stranded DNA, and exhibits RNase H activity. Also involved in replication and repair of rDNA and in repairing mitochondrial DNA. In Sordaria macrospora (strain ATCC MYA-333 / DSM 997 / K(L3346) / K-hell), this protein is Flap endonuclease 1.